Consider the following 352-residue polypeptide: Holliday junction branch migration complex subunit RuvB (352 aa).

The interval 1-42 is disordered; it reads MAIVSSSAGRADSQPPAAKSRVVDASPLPEEASPAREDGLRP. The interval 13-201 is large ATPase domain (RuvB-L); sequence SQPPAAKSRV…FGLIQRLEFY (189 aa). Positions 33-42 are enriched in basic and acidic residues; that stretch reads SPAREDGLRP. ATP-binding residues include Leu40, Arg41, Gly82, Lys85, Thr86, Thr87, Arg191, Tyr201, and Arg238. Thr86 provides a ligand contact to Mg(2+). The segment at 202–273 is small ATPAse domain (RuvB-S); it reads GLEDLQAIVE…LVDEALTLHR (72 aa). The head domain (RuvB-H) stretch occupies residues 276–352; sequence ARGLDASDRR…RRHLGWPELP (77 aa). Residues Arg331 and Arg336 each coordinate DNA.

Belongs to the RuvB family. Homohexamer. Forms an RuvA(8)-RuvB(12)-Holliday junction (HJ) complex. HJ DNA is sandwiched between 2 RuvA tetramers; dsDNA enters through RuvA and exits via RuvB. An RuvB hexamer assembles on each DNA strand where it exits the tetramer. Each RuvB hexamer is contacted by two RuvA subunits (via domain III) on 2 adjacent RuvB subunits; this complex drives branch migration. In the full resolvosome a probable DNA-RuvA(4)-RuvB(12)-RuvC(2) complex forms which resolves the HJ.

The protein localises to the cytoplasm. It catalyses the reaction ATP + H2O = ADP + phosphate + H(+). In terms of biological role, the RuvA-RuvB-RuvC complex processes Holliday junction (HJ) DNA during genetic recombination and DNA repair, while the RuvA-RuvB complex plays an important role in the rescue of blocked DNA replication forks via replication fork reversal (RFR). RuvA specifically binds to HJ cruciform DNA, conferring on it an open structure. The RuvB hexamer acts as an ATP-dependent pump, pulling dsDNA into and through the RuvAB complex. RuvB forms 2 homohexamers on either side of HJ DNA bound by 1 or 2 RuvA tetramers; 4 subunits per hexamer contact DNA at a time. Coordinated motions by a converter formed by DNA-disengaged RuvB subunits stimulates ATP hydrolysis and nucleotide exchange. Immobilization of the converter enables RuvB to convert the ATP-contained energy into a lever motion, pulling 2 nucleotides of DNA out of the RuvA tetramer per ATP hydrolyzed, thus driving DNA branch migration. The RuvB motors rotate together with the DNA substrate, which together with the progressing nucleotide cycle form the mechanistic basis for DNA recombination by continuous HJ branch migration. Branch migration allows RuvC to scan DNA until it finds its consensus sequence, where it cleaves and resolves cruciform DNA. This is Holliday junction branch migration complex subunit RuvB from Prochlorococcus marinus (strain MIT 9303).